A 133-amino-acid chain; its full sequence is Small ribosomal subunit protein uS8 (133 aa).

Belongs to the universal ribosomal protein uS8 family. In terms of assembly, part of the 30S ribosomal subunit. Contacts proteins S5 and S12.

One of the primary rRNA binding proteins, it binds directly to 16S rRNA central domain where it helps coordinate assembly of the platform of the 30S subunit. The sequence is that of Small ribosomal subunit protein uS8 from Thermosynechococcus vestitus (strain NIES-2133 / IAM M-273 / BP-1).